The chain runs to 278 residues: Putative transposase for insertion sequence element IS986/IS6110 (278 aa).

The 168-residue stretch at 101–268 (GPPAPNRLWV…VPPVELEAAY (168 aa)) folds into the Integrase catalytic domain.

Its function is as follows. Involved in the transposition of the insertion sequence. The protein is Putative transposase for insertion sequence element IS986/IS6110 of Mycobacterium bovis (strain ATCC BAA-935 / AF2122/97).